The chain runs to 361 residues: Peptide chain release factor 1 (361 aa).

Position 237 is an N5-methylglutamine (Q237).

The protein belongs to the prokaryotic/mitochondrial release factor family. Post-translationally, methylated by PrmC. Methylation increases the termination efficiency of RF1.

The protein resides in the cytoplasm. Functionally, peptide chain release factor 1 directs the termination of translation in response to the peptide chain termination codons UAG and UAA. This is Peptide chain release factor 1 from Alcanivorax borkumensis (strain ATCC 700651 / DSM 11573 / NCIMB 13689 / SK2).